Here is a 556-residue protein sequence, read N- to C-terminus: 2-succinyl-5-enolpyruvyl-6-hydroxy-3-cyclohexene-1-carboxylate synthase (556 aa).

Belongs to the TPP enzyme family. MenD subfamily. As to quaternary structure, homodimer. Mg(2+) serves as cofactor. It depends on Mn(2+) as a cofactor. The cofactor is thiamine diphosphate.

It catalyses the reaction isochorismate + 2-oxoglutarate + H(+) = 5-enolpyruvoyl-6-hydroxy-2-succinyl-cyclohex-3-ene-1-carboxylate + CO2. It participates in quinol/quinone metabolism; 1,4-dihydroxy-2-naphthoate biosynthesis; 1,4-dihydroxy-2-naphthoate from chorismate: step 2/7. Its pathway is quinol/quinone metabolism; menaquinone biosynthesis. Its function is as follows. Catalyzes the thiamine diphosphate-dependent decarboxylation of 2-oxoglutarate and the subsequent addition of the resulting succinic semialdehyde-thiamine pyrophosphate anion to isochorismate to yield 2-succinyl-5-enolpyruvyl-6-hydroxy-3-cyclohexene-1-carboxylate (SEPHCHC). The sequence is that of 2-succinyl-5-enolpyruvyl-6-hydroxy-3-cyclohexene-1-carboxylate synthase from Mycobacterium leprae (strain Br4923).